The primary structure comprises 1330 residues: Ubinuclein-2 (1330 aa).

The segment at 1–113 is disordered; it reads MAEPRRVAFI…PPPRPPKETV (113 aa). Residue S13 is modified to Phosphoserine. Basic and acidic residues-rich tracts occupy residues 16 to 31 and 55 to 67; these read RRRE…EPPR and ARDK…EVSR. The span at 81–96 shows a compositional bias: pro residues; that stretch reads PEPPPPPLPLQTPPPR. At T229 the chain carries Phosphothreonine. Position 236 is a phosphoserine (S236). 2 disordered regions span residues 236 to 304 and 322 to 345; these read SDTE…KKRY and DALK…PKPP. T238 is subject to Phosphothreonine. K258 participates in a covalent cross-link: Glycyl lysine isopeptide (Lys-Gly) (interchain with G-Cter in SUMO2). S297 is subject to Phosphoserine. 4 positions are modified to phosphoserine: S402, S405, S408, and S570. Disordered regions lie at residues 559–583, 767–789, 801–835, 866–909, 964–991, 1021–1202, and 1292–1330; these read LQAD…KRVI, NKGP…GLRE, LATP…DLAH, GLQR…SLTQ, YRLP…APST, PKLA…SSVV, and PGTQ…RKPQ. The span at 560–570 shows a compositional bias: basic and acidic residues; that stretch reads QADEEREKNGS. 2 stretches are compositionally biased toward polar residues: residues 767 to 780 and 809 to 818; these read NKGP…NVPT and SPQTAHSSSL. Low complexity predominate over residues 866–895; sequence GLQRSSQIHASSSQTHVSSSQAQAAASSHA. 2 stretches are compositionally biased toward polar residues: residues 899–909 and 969–980; these read SEAQDASSLTQ and STPSPGNGSQGS. Pro residues predominate over residues 1030-1044; that stretch reads ATSPKPLTSPKPSVS. Over residues 1045 to 1056 the composition is skewed to low complexity; it reads PKPSLSAKPSVS. K1052 is subject to N6-acetyllysine. Polar residues-rich tracts occupy residues 1073–1148, 1158–1169, and 1308–1317; these read PSSS…NSLS, RGSNLNSSGANR, and HLQQAFNDGG. S1107 bears the Phosphoserine mark. K1132 is modified (N6-acetyllysine). The segment covering 1321-1330 has biased composition (basic and acidic residues); sequence GDTKLPRKPQ.

Belongs to the ubinuclein family.

This Rattus norvegicus (Rat) protein is Ubinuclein-2 (Ubn2).